Consider the following 619-residue polypeptide: Magnesium-chelatase 67 kDa subunit (619 aa).

An ATP-binding site is contributed by 33-40 (STVGSGKS). The tract at residues 273 to 321 (TRMPEREPSEEEMQQEEPPPPEEQPEQEGEDENAPPDETDSDADEEQEE) is disordered. A compositionally biased stretch (acidic residues) spans 280–321 (PSEEEMQQEEPPPPEEQPEQEGEDENAPPDETDSDADEEQEE). Residues 431–619 (LFIFMVDASG…AEQIVEAALS (189 aa)) form the VWFA domain.

It belongs to the Mg-chelatase subunits D/I family.

It catalyses the reaction protoporphyrin IX + Mg(2+) + ATP + H2O = Mg-protoporphyrin IX + ADP + phosphate + 3 H(+). The protein operates within porphyrin-containing compound metabolism; bacteriochlorophyll biosynthesis. Its function is as follows. Involved in bacteriochlorophyll biosynthesis; introduces a magnesium ion into protoporphyrin IX to yield Mg-protoporphyrin IX. In Chlorobaculum parvum (strain DSM 263 / NCIMB 8327) (Chlorobium vibrioforme subsp. thiosulfatophilum), this protein is Magnesium-chelatase 67 kDa subunit (bchD).